The primary structure comprises 421 residues: MGSKDLFQRGSSLFPMGVNSPVRYFKDYPFYVDNASGSRIYDVDGNEYIDYCLAYGPSILGHADPDVVRAVRDQAEKGLIYGAPSEAEIRLGDIIRRSSKNIEMMRFTNSGTEATMHAIRLARAYTGRSIIVKMEGGFHGAHDYSLIRSGSGTLTFGSPSSPGVPEEVARTVVVGRYNDEANIRNIFSQYGSRIAAVITEPIMGNAGVITPEPGFLEFLRDITQKNGSLLIFDEVITGYRFAFSPYQDIIGIRPDLTTMGKIIGGGMPIGLFGGSADIMKKVSPSGDVYQSGTFSGNPVTMAAGFAALKKLQGMDYASLVRRTEKLMNGIDDILAKRKIRHVVNGYRSMFQFFFAESAKNYDEVMKADRDLYFRIFKRLMNHGVYVPPSQFETNFVSFAHSDDDISKTIEAFDLSVGEAAK.

N6-(pyridoxal phosphate)lysine is present on Lys-261.

This sequence belongs to the class-III pyridoxal-phosphate-dependent aminotransferase family. HemL subfamily. It depends on pyridoxal 5'-phosphate as a cofactor.

It is found in the cytoplasm. It catalyses the reaction (S)-4-amino-5-oxopentanoate = 5-aminolevulinate. It participates in porphyrin-containing compound metabolism; protoporphyrin-IX biosynthesis; 5-aminolevulinate from L-glutamyl-tRNA(Glu): step 2/2. In Thermoplasma acidophilum (strain ATCC 25905 / DSM 1728 / JCM 9062 / NBRC 15155 / AMRC-C165), this protein is Glutamate-1-semialdehyde 2,1-aminomutase (hemL).